We begin with the raw amino-acid sequence, 692 residues long: Elongation factor G (692 aa).

The 276-residue stretch at 8–283 (NRIRNIGIAA…AVIDYLPAPT (276 aa)) folds into the tr-type G domain. GTP contacts are provided by residues 17 to 24 (AHIDAGKT), 81 to 85 (DTPGH), and 135 to 138 (NKMD).

This sequence belongs to the TRAFAC class translation factor GTPase superfamily. Classic translation factor GTPase family. EF-G/EF-2 subfamily.

It localises to the cytoplasm. Catalyzes the GTP-dependent ribosomal translocation step during translation elongation. During this step, the ribosome changes from the pre-translocational (PRE) to the post-translocational (POST) state as the newly formed A-site-bound peptidyl-tRNA and P-site-bound deacylated tRNA move to the P and E sites, respectively. Catalyzes the coordinated movement of the two tRNA molecules, the mRNA and conformational changes in the ribosome. The sequence is that of Elongation factor G from Helicobacter pylori (strain P12).